We begin with the raw amino-acid sequence, 310 residues long: p-hydroxybenzoic acid efflux pump subunit AaeA (310 aa).

The helical transmembrane segment at 12 to 32 (AITVVLVILAFIAIFNAWVYY) threads the bilayer.

Belongs to the membrane fusion protein (MFP) (TC 8.A.1) family.

The protein resides in the cell inner membrane. Functionally, forms an efflux pump with AaeB. This Shigella sonnei (strain Ss046) protein is p-hydroxybenzoic acid efflux pump subunit AaeA.